We begin with the raw amino-acid sequence, 181 residues long: MGLSFGKLFSRLFAKKEMRILMVGLDAAGKTTILYKLKLGEIVTTIPTIGFNVETVEYKNISFTVWDVGGQDKIRPLWRHYFQNTQGLIFVVDSNDRDRVVEARDELHRMLNEDELRDAVLLVFANKQDLPNAMNAAEITDKLGLHSLRQRHWYIQSTCATSGEGLYEGLDWLSNNIASKA.

Residue Gly-2 is the site of N-myristoyl glycine attachment. GTP contacts are provided by residues 24 to 31, 67 to 71, and 126 to 129; these read GLDAAGKT, DVGGQ, and NKQD.

It belongs to the small GTPase superfamily. Arf family. In terms of assembly, interacts with AGD7 and GDAP1. GDP-locked form interacts with cytosolic tail of p24 proteins. Interacts with AGD5 at trans-Golgi network. Interacts with A.tumefaciens AK6b.

It is found in the golgi apparatus. Its subcellular location is the endosome. It localises to the trans-Golgi network. The protein resides in the early endosome. The catalysed reaction is GTP + H2O = GDP + phosphate + H(+). With respect to regulation, activated by AGD7 and AGD10. In terms of biological role, GTP-binding protein involved in protein trafficking; required for the sequence-specific vacuolar sorting route to the lytic vacuole, for the ER-to-Golgi transport and for the Golgi-derived transport to the plasma membrane. Involved in the recruitment of COPI and GDAP1 to membranes. Required for recycling of PIN auxin transporters (e.g. PIN1 and PIN2) in a fungal toxin brefeldin A (BFA)-dependent manner. Involved in various auxin-dependent developmental processes. This is ADP-ribosylation factor 1 from Arabidopsis thaliana (Mouse-ear cress).